The primary structure comprises 592 residues: MQQKIRSPFVVVMGHVDVGKTLLLDKIRGTSVAYREPGMITQHIGMSLVPWPAVEKFAGPLVDRLKLRGRIWIPGFLFIDTPGHAAFSNLRKRGGSVADLAILVVDITSGLEDQGVESLKLIQSRGVPFVIAANKLDRIYGWKSVENRPFLFAVEEQEWHAVATLEEQIGKLITQLANLGIDADRYDRVRDFSKQVPIVPTSAVTGEGVADLLLVLAGVSQRFIPREKLQVRDGPARGVVMEVKEERGLGVVADVILYDGKLRKGDVIVTAGLDGSRQAKVRMLIMPKSLEEMRDPEDKFMAVQEVEAAAGVRVVAEGLEGVVAGAPLLAVWDPKDLPEALKSVGEEIAEIKIESDKEGVIVRADTFGTLESIILFLRQQGVPVRKADVGPPTHKDVVEAVLSRRKNPAYGAILAFNVKVPPEVETEAQSSGVKIIRGEILYRIFDEYVKWSTEVKTKTVEQVLSQLTRPAKIQILPGYVFRRSDPAIVGVKVLAGTLKPGVTLAKDGREVGKVMQIQRQGKPVAEAVAGDEVAISIQGDVIVGRQIKEGDVLYVYIPDEQARQWLFRYKQYLRKDEVEALEEYLKTRKKSA.

One can recognise a tr-type G domain in the interval 5-226 (IRSPFVVVMG…AGVSQRFIPR (222 aa)). A G1 region spans residues 14 to 21 (GHVDVGKT). 14-21 (GHVDVGKT) lines the GTP pocket. The interval 39–43 (MITQH) is G2. A G3 region spans residues 80–83 (DTPG). GTP-binding positions include 80–84 (DTPGH) and 134–137 (NKLD). The segment at 134-137 (NKLD) is G4. Residues 202–204 (SAV) are G5.

Belongs to the TRAFAC class translation factor GTPase superfamily. Classic translation factor GTPase family. IF-2 subfamily.

Function in general translation initiation by promoting the binding of the formylmethionine-tRNA to ribosomes. Seems to function along with eIF-2. This chain is Probable translation initiation factor IF-2, found in Pyrobaculum calidifontis (strain DSM 21063 / JCM 11548 / VA1).